The sequence spans 253 residues: Hydroxyacylglutathione hydrolase (253 aa).

Residues H59, H61, D63, H64, H118, D143, and H181 each coordinate Zn(2+).

This sequence belongs to the metallo-beta-lactamase superfamily. Glyoxalase II family. Monomer. The cofactor is Zn(2+).

It catalyses the reaction an S-(2-hydroxyacyl)glutathione + H2O = a 2-hydroxy carboxylate + glutathione + H(+). It functions in the pathway secondary metabolite metabolism; methylglyoxal degradation; (R)-lactate from methylglyoxal: step 2/2. In terms of biological role, thiolesterase that catalyzes the hydrolysis of S-D-lactoyl-glutathione to form glutathione and D-lactic acid. This is Hydroxyacylglutathione hydrolase from Prochlorococcus marinus (strain SARG / CCMP1375 / SS120).